Reading from the N-terminus, the 147-residue chain is Peptide deformylase (147 aa).

Fe cation is bound by residues Cys88 and His130. Glu131 is an active-site residue. His134 contributes to the Fe cation binding site.

The protein belongs to the polypeptide deformylase family. Fe(2+) is required as a cofactor.

The catalysed reaction is N-terminal N-formyl-L-methionyl-[peptide] + H2O = N-terminal L-methionyl-[peptide] + formate. Its function is as follows. Removes the formyl group from the N-terminal Met of newly synthesized proteins. Requires at least a dipeptide for an efficient rate of reaction. N-terminal L-methionine is a prerequisite for activity but the enzyme has broad specificity at other positions. The chain is Peptide deformylase from Alkaliphilus metalliredigens (strain QYMF).